The sequence spans 323 residues: Aquaporin-4 (323 aa).

At 1 to 36 (MSDGAAARRWGKCGPPCSRESIMVAFKGVWTQAFWK) the chain is on the cytoplasmic side. S-palmitoyl cysteine attachment occurs at residues cysteine 13 and cysteine 17. Residues 37–57 (AVTAEFLAMLIFVLLSVGSTI) traverse the membrane as a helical segment. Residues 58–69 (NWGGSENPLPVD) lie on the Extracellular side of the membrane. Residues 70–89 (MVLISLCFGLSIATMVQCFG) form a helical membrane-spanning segment. The Cytoplasmic portion of the chain corresponds to 90 to 93 (HISG). Residues 94-101 (GHINPAVT) constitute an intramembrane region (discontinuously helical). Residues 97 to 99 (NPA) carry the NPA 1 motif. Residues 102–115 (VAMVCTRKISIAKS) are Cytoplasmic-facing. Residue serine 111 is modified to Phosphoserine; by PKG. Residues 116-136 (VFYITAQCLGAIIGAGILYLV) form a helical membrane-spanning segment. Over 137 to 155 (TPPSVVGGLGVTTVHGNLT) the chain is Extracellular. A glycan (N-linked (GlcNAc...) asparagine) is linked at asparagine 153. The chain crosses the membrane as a helical span at residues 156-176 (AGHGLLVELIITFQLVFTIFA). Residues 177-184 (SCDSKRTD) lie on the Cytoplasmic side of the membrane. A Phosphoserine; by PKC modification is found at serine 180. A helical membrane pass occupies residues 185–205 (VTGSVALAIGFSVAIGHLFAI). Residues 206 to 208 (NYT) lie on the Extracellular side of the membrane. An intramembrane region (discontinuously helical) is located at residues 209–222 (GASMNPARSFGPAV). Positions 213-215 (NPA) match the NPA 2 motif. Residues 223 to 231 (IMGNWENHW) are Extracellular-facing. Residues 232–252 (IYWVGPIIGAVLAGALYEYVF) form a helical membrane-spanning segment. Over 253 to 323 (CPDVELKRRL…DSSGEVLSSV (71 aa)) the chain is Cytoplasmic. A phosphoserine mark is found at serine 276 and serine 285. Phosphothreonine is present on threonine 289. Serine 321 is modified (phosphoserine).

It belongs to the MIP/aquaporin (TC 1.A.8) family. In terms of assembly, homotetramer. The tetramers can form oligomeric arrays in membranes. The size of the oligomers differs between tissues and is smaller in skeletal muscle than in brain. Interaction between AQP4 oligomeric arrays in close-by cells can contribute to cell-cell adhesion. Part of a complex containing MLC1, TRPV4, HEPACAM and ATP1B1. In terms of processing, phosphorylation by PKC at Ser-180 promotes internalization from the cell membrane, reducing the conductance by 50%. Phosphorylation by PKG at Ser-111 in response to glutamate increases conductance by 40%. Post-translationally, isoform Long: Palmitoylated on its N-terminal region. Isoform 3: Not palmitoylated. In terms of tissue distribution, detected in cerebellum. Detected on pericapillary astrocyte endfeet in cerebellum, and in skeletal muscle. Detected in glial lamellae in the hypothalamus (at protein level). Abundant in mature brain cortex, cerebellum and spinal cord. Highly expressed in the ependymal cell lining the aqueductal system and over the space of the brain in contact with the subarachnoid space. Detected in paraventricular and supraoptic nuclei, the granule cell layer of the dentate gyrus and the Purkinje cell layer in the cerebellum. Only weakly detectable in eye, kidney, intestine, and lung.

Its subcellular location is the cell membrane. The protein resides in the basolateral cell membrane. It is found in the endosome membrane. The protein localises to the sarcolemma. It localises to the cell projection. The enzyme catalyses H2O(in) = H2O(out). Functionally, forms a water-specific channel. Plays an important role in brain water homeostasis and in glymphatic solute transport. Required for a normal rate of water exchange across the blood brain interface. Required for normal levels of cerebrospinal fluid influx into the brain cortex and parenchyma along paravascular spaces that surround penetrating arteries, and for normal drainage of interstitial fluid along paravenous drainage pathways. Thereby, it is required for normal clearance of solutes from the brain interstitial fluid, including soluble beta-amyloid peptides derived from APP. Plays a redundant role in urinary water homeostasis and urinary concentrating ability. This Rattus norvegicus (Rat) protein is Aquaporin-4 (Aqp4).